Reading from the N-terminus, the 704-residue chain is DNA ligase (704 aa).

NAD(+)-binding positions include 43–47 (DADYD), 92–93 (SL), and Glu-124. Lys-126 functions as the N6-AMP-lysine intermediate in the catalytic mechanism. NAD(+)-binding residues include Arg-147, Glu-182, Lys-298, and Lys-322. 4 residues coordinate Zn(2+): Cys-427, Cys-430, Cys-445, and Cys-451. One can recognise a BRCT domain in the interval 625-704 (PVESPIAGKI…DAWLRLIGDA (80 aa)).

The protein belongs to the NAD-dependent DNA ligase family. LigA subfamily. It depends on Mg(2+) as a cofactor. The cofactor is Mn(2+).

The enzyme catalyses NAD(+) + (deoxyribonucleotide)n-3'-hydroxyl + 5'-phospho-(deoxyribonucleotide)m = (deoxyribonucleotide)n+m + AMP + beta-nicotinamide D-nucleotide.. Its function is as follows. DNA ligase that catalyzes the formation of phosphodiester linkages between 5'-phosphoryl and 3'-hydroxyl groups in double-stranded DNA using NAD as a coenzyme and as the energy source for the reaction. It is essential for DNA replication and repair of damaged DNA. The polypeptide is DNA ligase (Cereibacter sphaeroides (strain ATCC 17025 / ATH 2.4.3) (Rhodobacter sphaeroides)).